A 612-amino-acid chain; its full sequence is Apoptosis-inducing factor 1, mitochondrial (612 aa).

Short sequence motifs (mitochondrial localization signal) lie at residues 1–30 (MFRC…PKQR) and 62–88 (KMDN…KTIK). Residues 1-53 (MFRCGGLAGAFKQKLVPLVRSVCVQRPKQRNRLPGNLFQQWRVPLELQMARQM) constitute a mitochondrion transit peptide. 2 consecutive propeptides (removed in mature form) follow at residues 54 to 100 (ASSG…RIMG) and 55 to 101 (SSGP…IMGL). At Lys108 the chain carries N6-succinyllysine. Ser115 is subject to Phosphoserine. The segment at 133 to 482 (FLLIGGGTAA…KPYWHQSMFW (350 aa)) is FAD-dependent oxidoreductase. Residues 137-141 (GGGTA), 163-164 (ED), Arg171, and Lys176 contribute to the FAD site. Trp195 provides a ligand contact to NAD(+). Val232 is a binding site for FAD. A Glycyl lysine isopeptide (Lys-Gly) (interchain with G-Cter in ubiquitin) cross-link involves residue Lys254. Ser267 bears the Phosphoserine mark. Residue Arg284 participates in FAD binding. Residues 307-310 (GGFL), Glu335, and Lys341 each bind NAD(+). At Ser370 the chain carries Phosphoserine. Lys387 is subject to N6-acetyllysine. Gly398 contacts NAD(+). Asp437 serves as a coordination point for FAD. A Nuclear localization signal motif is present at residues 445–450 (KLGRRR). NAD(+) contacts are provided by residues 452 to 453 (EH), Trp482, and Glu492. Residues 453-454 (HH) and Trp482 contribute to the FAD site. Residues 512-528 (AQDNPKSATEQSGTGIR) are compositionally biased toward polar residues. Residues 512–551 (AQDNPKSATEQSGTGIRSESETESEASEITIPPSDPAVPQ) are disordered. Thr520 is modified (phosphothreonine). A phosphoserine mark is found at Ser523 and Ser529. NAD(+) is bound at residue Asn582. Lys592 is modified (N6-acetyllysine).

This sequence belongs to the FAD-dependent oxidoreductase family. As to quaternary structure, monomer (oxidized form). Homodimer (reduced form). Upon reduction with NADH, undergoes dimerization and forms tight, long-lived FADH2-NAD charge transfer complexes (CTC) resistant to oxidation. Also dimerizes with isoform 3 preventing its release from mitochondria. Interacts with XIAP/BIRC4. Interacts (via N-terminus) with EIF3G (via C-terminus). Interacts with PRELID1. Interacts with CHCHD4; the interaction increases in presence of NADH. Interacts with processed form of PARP1 (Poly [ADP-ribose] polymerase 1, processed C-terminus); interaction is mediated with poly-ADP-ribose chains attached to PARP1, promoting translocation into the nucleus. FAD serves as cofactor. In terms of processing, under normal conditions, a 54-residue N-terminal segment is first proteolytically removed during or just after translocation into the mitochondrial intermembrane space (IMS) by the mitochondrial processing peptidase (MPP) to form the inner-membrane-anchored mature form (AIFmit). During apoptosis, it is further proteolytically processed at amino-acid position 101 leading to the generation of the mature form, which is confined to the mitochondrial IMS in a soluble form (AIFsol). AIFsol is released to the cytoplasm in response to specific death signals, and translocated to the nucleus, where it induces nuclear apoptosis in a caspase-independent manner. Ubiquitination by XIAP/BIRC4 does not lead to proteasomal degradation. Ubiquitination at Lys-254 by XIAP/BIRC4 blocks its ability to bind DNA and induce chromatin degradation, thereby inhibiting its ability to induce cell death.

It is found in the mitochondrion intermembrane space. The protein localises to the mitochondrion inner membrane. It localises to the cytoplasm. Its subcellular location is the nucleus. The protein resides in the perinuclear region. The enzyme catalyses A + NADH + H(+) = AH2 + NAD(+). Functions both as NADH oxidoreductase and as regulator of apoptosis. In response to apoptotic stimuli, it is released from the mitochondrion intermembrane space into the cytosol and to the nucleus, where it functions as a proapoptotic factor in a caspase-independent pathway. Release into the cytoplasm is mediated upon binding to poly-ADP-ribose chains. The soluble form (AIFsol) found in the nucleus induces 'parthanatos' i.e. caspase-independent fragmentation of chromosomal DNA. Binds to DNA in a sequence-independent manner. Interacts with EIF3G, and thereby inhibits the EIF3 machinery and protein synthesis, and activates caspase-7 to amplify apoptosis. Plays a critical role in caspase-independent, pyknotic cell death in hydrogen peroxide-exposed cells. In contrast, participates in normal mitochondrial metabolism. Plays an important role in the regulation of respiratory chain biogenesis by interacting with CHCHD4 and controlling CHCHD4 mitochondrial import. The polypeptide is Apoptosis-inducing factor 1, mitochondrial (Aifm1) (Rattus norvegicus (Rat)).